The sequence spans 229 residues: Large ribosomal subunit protein uL1 (229 aa).

The protein belongs to the universal ribosomal protein uL1 family. In terms of assembly, part of the 50S ribosomal subunit.

Its function is as follows. Binds directly to 23S rRNA. The L1 stalk is quite mobile in the ribosome, and is involved in E site tRNA release. In terms of biological role, protein L1 is also a translational repressor protein, it controls the translation of the L11 operon by binding to its mRNA. The protein is Large ribosomal subunit protein uL1 of Clostridium acetobutylicum (strain ATCC 824 / DSM 792 / JCM 1419 / IAM 19013 / LMG 5710 / NBRC 13948 / NRRL B-527 / VKM B-1787 / 2291 / W).